The primary structure comprises 647 residues: Nucleoside triphosphatase I (647 aa).

Positions 48–213 constitute a Helicase ATP-binding domain; the sequence is FIGLSELNSL…KYLINLLRPK (166 aa). 61-68 is a binding site for ATP; the sequence is WDTGYGKT. A DEXH box motif is present at residues 150 to 153; it reads DEVH. In terms of domain architecture, Helicase C-terminal spans 377 to 540; sequence YIEACKIILN…KINVLNSFMK (164 aa). The segment at 466 to 532 is binding to the cap-specific mRNA (nucleoside-2'-O-)-methyltransferase; the sequence is DIIILDLPWK…DLIKSKQDKI (67 aa).

Belongs to the helicase family. NPH I subfamily. In terms of assembly, monomer. Interacts (via C-terminus) with RAP94 (via N-terminus). Interacts with the cap-specific mRNA (nucleoside-2'-O-)-methyltransferase.

Its subcellular location is the virion. The enzyme catalyses a ribonucleoside 5'-triphosphate + H2O = a ribonucleoside 5'-diphosphate + phosphate + H(+). Its function is as follows. DNA-dependent ATPase required for providing the needed energy to achieve the termination of early transcripts. Acts in concert with the RAP94 subunit of the virion RNA polymerase and the capping enzyme/VTF to catalyze release of UUUUUNU-containing nascent RNA from the elongation complex. NPH-I must bind ssDNA in order to exhibit ATPase activity. The protein is Nucleoside triphosphatase I (NPH1) of Melanoplus sanguinipes entomopoxvirus (MsEPV).